Consider the following 131-residue polypeptide: Aspartate 1-decarboxylase (131 aa).

Ser-25 acts as the Schiff-base intermediate with substrate; via pyruvic acid in catalysis. A Pyruvic acid (Ser) modification is found at Ser-25. Substrate is bound at residue Thr-57. The Proton donor role is filled by Tyr-58. Residue 73-75 coordinates substrate; sequence GAA.

Belongs to the PanD family. In terms of assembly, heterooctamer of four alpha and four beta subunits. Pyruvate serves as cofactor. Is synthesized initially as an inactive proenzyme, which is activated by self-cleavage at a specific serine bond to produce a beta-subunit with a hydroxyl group at its C-terminus and an alpha-subunit with a pyruvoyl group at its N-terminus.

It localises to the cytoplasm. The enzyme catalyses L-aspartate + H(+) = beta-alanine + CO2. It participates in cofactor biosynthesis; (R)-pantothenate biosynthesis; beta-alanine from L-aspartate: step 1/1. Functionally, catalyzes the pyruvoyl-dependent decarboxylation of aspartate to produce beta-alanine. The chain is Aspartate 1-decarboxylase from Anaeromyxobacter dehalogenans (strain 2CP-C).